The sequence spans 223 residues: Transcription factor bHLH75 (223 aa).

The interval 58 to 100 is disordered; it reads FPNLLHGNTRRKGNKEESGSKRRRKRSEEEEAMNGDETQKPKD. One can recognise a bHLH domain in the interval 110 to 160; the sequence is QATDSHSLAERVRREKINERLKCLQDLVPGCYKAMGMAVMLDVIIDYVRSL.

In terms of assembly, homodimer. In terms of tissue distribution, expressed in leaves, stems, and flowers.

It localises to the nucleus. The protein is Transcription factor bHLH75 (BHLH75) of Arabidopsis thaliana (Mouse-ear cress).